A 148-amino-acid chain; its full sequence is Deoxyuridine 5'-triphosphate nucleotidohydrolase (148 aa).

Residues 67-69 (RSG), Asn-80, 84-86 (TID), and Lys-94 each bind substrate.

Belongs to the dUTPase family. The cofactor is Mg(2+).

The catalysed reaction is dUTP + H2O = dUMP + diphosphate + H(+). It functions in the pathway pyrimidine metabolism; dUMP biosynthesis; dUMP from dCTP (dUTP route): step 2/2. Its function is as follows. This enzyme is involved in nucleotide metabolism: it produces dUMP, the immediate precursor of thymidine nucleotides and it decreases the intracellular concentration of dUTP so that uracil cannot be incorporated into DNA. This Orientia tsutsugamushi (strain Boryong) (Rickettsia tsutsugamushi) protein is Deoxyuridine 5'-triphosphate nucleotidohydrolase.